The sequence spans 244 residues: Chaperone protein FimB/FhaD (244 aa).

A signal peptide spans 1–24 (MARWRRRLGVAALGAAMLASLAPA).

It belongs to the periplasmic pilus chaperone family.

The protein localises to the periplasm. Its function is as follows. Required for the biogenesis of the filamentous hemagglutinin and the fimbria. This chain is Chaperone protein FimB/FhaD (fimB), found in Bordetella pertussis (strain Tohama I / ATCC BAA-589 / NCTC 13251).